We begin with the raw amino-acid sequence, 84 residues long: Metallothionein-like protein 2C (84 aa).

It belongs to the metallothionein superfamily. Type 15 family.

The protein localises to the cytoplasm. The protein resides in the cytosol. In terms of biological role, metallothioneins have a high content of cysteine residues that bind various heavy metals. Acts as a reactive oxygen species (ROS) scavenger in the cytosol. Possesses superoxide anion and hydroxyl radical scavenging activities in vitro. Plays a role during root development, lateral root initiation and seed embryo germination, possibly by regulating levels of cytokinin. This is Metallothionein-like protein 2C (MT2C) from Oryza sativa subsp. indica (Rice).